A 427-amino-acid polypeptide reads, in one-letter code: GTPase Obg (427 aa).

Positions 1–158 (MFVDQVKIYV…RDVTLELKVL (158 aa)) constitute an Obg domain. The OBG-type G domain maps to 159-329 (ADVGLVGFPS…LLFEVANLLE (171 aa)). GTP is bound by residues 165 to 172 (GFPSVGKS), 190 to 194 (FTTIV), 212 to 215 (DLPG), 282 to 285 (NKMD), and 310 to 312 (SAV). The Mg(2+) site is built by Ser-172 and Thr-192. One can recognise an OCT domain in the interval 349-427 (YKFESESNFE…ILEYQFEFID (79 aa)).

The protein belongs to the TRAFAC class OBG-HflX-like GTPase superfamily. OBG GTPase family. Monomer. Mg(2+) serves as cofactor.

The protein resides in the cytoplasm. Functionally, an essential GTPase which binds GTP, GDP and possibly (p)ppGpp with moderate affinity, with high nucleotide exchange rates and a fairly low GTP hydrolysis rate. Plays a role in control of the cell cycle, stress response, ribosome biogenesis and in those bacteria that undergo differentiation, in morphogenesis control. This chain is GTPase Obg, found in Bacillus mycoides (strain KBAB4) (Bacillus weihenstephanensis).